Reading from the N-terminus, the 314-residue chain is tRNA dimethylallyltransferase (314 aa).

12 to 19 is a binding site for ATP; that stretch reads GPTASGKT. 14-19 serves as a coordination point for substrate; that stretch reads TASGKT. 4 interaction with substrate tRNA regions span residues 37–40, 161–165, 242–247, and 275–282; these read DSAL, QRINR, RCVGYR, and KRQITWLR.

The protein belongs to the IPP transferase family. In terms of assembly, monomer. Mg(2+) is required as a cofactor.

The enzyme catalyses adenosine(37) in tRNA + dimethylallyl diphosphate = N(6)-dimethylallyladenosine(37) in tRNA + diphosphate. Functionally, catalyzes the transfer of a dimethylallyl group onto the adenine at position 37 in tRNAs that read codons beginning with uridine, leading to the formation of N6-(dimethylallyl)adenosine (i(6)A). In Mannheimia succiniciproducens (strain KCTC 0769BP / MBEL55E), this protein is tRNA dimethylallyltransferase.